A 293-amino-acid chain; its full sequence is Methoxy mycolic acid synthase MmaA3 (293 aa).

Residues 39-40 (YS), 78-80 (GCG), 100-105 (TLSKNQ), 129-130 (WA), and Ile-142 contribute to the S-adenosyl-L-methionine site. The active site involves Cys-275.

Belongs to the CFA/CMAS family.

Its pathway is lipid metabolism; mycolic acid biosynthesis. In terms of biological role, involved in the biosynthesis of methoxymycolic acid. It catalyzes the O-methylation of the hydroxy group of the hydroxymycolate to form a methyl ether. This Mycobacterium bovis (strain ATCC BAA-935 / AF2122/97) protein is Methoxy mycolic acid synthase MmaA3 (cmaB).